The sequence spans 725 residues: Envelope glycoprotein H (725 aa).

The signal sequence occupies residues 1-19 (MKLSLILSIALCSTRVVYA). Topologically, residues 20–700 (AGAEAPRISR…LVNVRPSMPY (681 aa)) are virion surface. Residues N38 and N50 are each glycosylated (N-linked (GlcNAc...) asparagine; by host). Positions 184 to 247 (TGYTVTVSLA…QTPDHDLLVV (64 aa)) are interaction with gL. Residues N319, N459, N621, and N681 are each glycosylated (N-linked (GlcNAc...) asparagine; by host). Residues 701–721 (SVVVALVIIAILMALGLYRLC) traverse the membrane as a helical segment. Residues 722–725 (RQKR) lie on the Intravirion side of the membrane.

This sequence belongs to the herpesviridae glycoprotein H family. In terms of assembly, interacts with glycoprotein L (gL); this interaction is necessary for the correct processing and cell surface expression of gH. The heterodimer gH/gL seems to interact with gB trimers during fusion. In terms of processing, N-glycosylated, O-glycosylated, and sialylated.

It localises to the virion membrane. The protein resides in the host cell membrane. It is found in the host endosome membrane. Functionally, the heterodimer glycoprotein H-glycoprotein L is required for the fusion of viral and plasma membranes leading to virus entry into the host cell. Following initial binding to host receptor, membrane fusion is mediated by the fusion machinery composed of gB and the heterodimer gH/gL. May also be involved in the fusion between the virion envelope and the outer nuclear membrane during virion morphogenesis. This is Envelope glycoprotein H from Murid herpesvirus 1 (strain Smith) (MuHV-1).